The following is a 544-amino-acid chain: Lariat debranching enzyme (544 aa).

Residues Cys8, His10, Asp39, and Asn84 each coordinate a divalent metal cation. The interval 124 to 154 is lariat recognition loop; the sequence is SGIFKSHDYRKGHFECPPYNSSTIRSIYHVR. N6-acetyllysine is present on Lys128. A divalent metal cation is bound by residues His174, His226, and His228. Residues 395-412 show a composition bias toward acidic residues; sequence EYEEQDDVESNDSGEDQS. The disordered stretch occupies residues 395–463; it reads EYEEQDDVES…PSDQASEFSA (69 aa). The span at 413 to 425 shows a compositional bias: polar residues; that stretch reads EYNTDTSALSSIN. Residues 429-439 are compositionally biased toward acidic residues; it reads IMLDEEEDEDS. The span at 445-463 shows a compositional bias: polar residues; the sequence is SGMNTPSVEPSDQASEFSA. Phosphoserine occurs at positions 464, 474, 478, 479, 485, 499, and 514. The tract at residues 476 to 544 is disordered; the sequence is IVSSDDTVDS…AVDDDDDDAA (69 aa). Residues 512–522 are compositionally biased toward basic and acidic residues; sequence RLSDEHEPEQR.

This sequence belongs to the lariat debranching enzyme family. It depends on Fe(2+) as a cofactor. The cofactor is Zn(2+). Mn(2+) is required as a cofactor. As to expression, ubiquitously expressed, strongest expression in the spinal cord and brainstem.

Its subcellular location is the nucleus. Active in presence of diverse metals including Fe(2+), Zn(2+), Mn(2+). Also activated by Ca(2+). Binds two metal cations in two adjacent alpha and beta metal-binding pockets. Its function is as follows. Cleaves the 2'-5' phosphodiester linkage at the branch point of excised lariat intron RNA and converts them into linear molecules that can be subsequently degraded, thereby facilitating ribonucleotide turnover. Linked to its role in pre-mRNA processing mechanism, may also participate in retrovirus replication via an RNA lariat intermediate in cDNA synthesis and have an antiviral cell-intrinsic defense function in the brainstem. This is Lariat debranching enzyme (DBR1) from Homo sapiens (Human).